The following is an 86-amino-acid chain: NADH-ubiquinone oxidoreductase chain 4L (86 aa).

2 helical membrane-spanning segments follow: residues 22–42 (LLVT…LLVY) and 52–72 (FIFL…LVSL).

It belongs to the complex I subunit 4L family.

Its subcellular location is the mitochondrion membrane. The catalysed reaction is a ubiquinone + NADH + 5 H(+)(in) = a ubiquinol + NAD(+) + 4 H(+)(out). In terms of biological role, core subunit of the mitochondrial membrane respiratory chain NADH dehydrogenase (Complex I) that is believed to belong to the minimal assembly required for catalysis. Complex I functions in the transfer of electrons from NADH to the respiratory chain. The immediate electron acceptor for the enzyme is believed to be ubiquinone. The protein is NADH-ubiquinone oxidoreductase chain 4L (ND4L) of Artemia salina (Brine shrimp).